The following is a 606-amino-acid chain: Flagellar WD repeat-containing protein Pf20 (606 aa).

Residues 229–250 (PLPGAERSLGGQSTAAAGGGAS) form a disordered region. 7 WD repeats span residues 324–354 (GHLL…KMWH), 366–396 (GHKD…KIWD), 408–438 (DHKQ…RLWD), 450–480 (GHVD…SVWD), 492–522 (GHQN…KLWD), 534–564 (TGKH…KAYS), and 576–606 (GHED…RLWS).

In terms of assembly, inter-microtubule bridges in flagella.

It is found in the cell projection. It localises to the cilium. The protein resides in the flagellum. The sequence is that of Flagellar WD repeat-containing protein Pf20 (PF20) from Chlamydomonas reinhardtii (Chlamydomonas smithii).